The sequence spans 282 residues: D-alanine aminotransferase (282 aa).

Tyr32 contributes to the substrate binding site. Arg51 serves as a coordination point for pyridoxal 5'-phosphate. 2 residues coordinate substrate: Arg99 and His101. Residue Lys146 is the Proton acceptor of the active site. N6-(pyridoxal phosphate)lysine is present on Lys146. Residue Glu178 participates in pyridoxal 5'-phosphate binding.

Belongs to the class-IV pyridoxal-phosphate-dependent aminotransferase family. As to quaternary structure, homodimer. Pyridoxal 5'-phosphate is required as a cofactor.

The enzyme catalyses D-alanine + 2-oxoglutarate = D-glutamate + pyruvate. Functionally, acts on the D-isomers of alanine, leucine, aspartate, glutamate, aminobutyrate, norvaline and asparagine. The enzyme transfers an amino group from a substrate D-amino acid to the pyridoxal phosphate cofactor to form pyridoxamine and an alpha-keto acid in the first half-reaction. The second half-reaction is the reverse of the first, transferring the amino group from the pyridoxamine to a second alpha-keto acid to form the product D-amino acid via a ping-pong mechanism. This is an important process in the formation of D-alanine and D-glutamate, which are essential bacterial cell wall components. This chain is D-alanine aminotransferase (dat), found in Staphylococcus aureus (strain MSSA476).